The chain runs to 691 residues: DNA ligase (691 aa).

NAD(+) is bound by residues 41–45, 90–91, and Glu130; these read DAEYD and SL. The active-site N6-AMP-lysine intermediate is Lys132. Residues Arg153, Glu190, Lys307, and Lys331 each contribute to the NAD(+) site. Zn(2+)-binding residues include Cys425, Cys428, Cys443, and Cys449. A BRCT domain is found at 610–691; the sequence is APQGVLAGKT…LHQLLEGNTP (82 aa).

This sequence belongs to the NAD-dependent DNA ligase family. LigA subfamily. Mg(2+) is required as a cofactor. The cofactor is Mn(2+).

The enzyme catalyses NAD(+) + (deoxyribonucleotide)n-3'-hydroxyl + 5'-phospho-(deoxyribonucleotide)m = (deoxyribonucleotide)n+m + AMP + beta-nicotinamide D-nucleotide.. Functionally, DNA ligase that catalyzes the formation of phosphodiester linkages between 5'-phosphoryl and 3'-hydroxyl groups in double-stranded DNA using NAD as a coenzyme and as the energy source for the reaction. It is essential for DNA replication and repair of damaged DNA. The protein is DNA ligase of Burkholderia lata (strain ATCC 17760 / DSM 23089 / LMG 22485 / NCIMB 9086 / R18194 / 383).